A 328-amino-acid polypeptide reads, in one-letter code: Biotin synthase (328 aa).

Residues Phe48–Arg277 form the Radical SAM core domain. [4Fe-4S] cluster contacts are provided by Cys66, Cys70, and Cys73. [2Fe-2S] cluster contacts are provided by Ser142 and Cys202.

Belongs to the radical SAM superfamily. Biotin synthase family. Homodimer. [4Fe-4S] cluster serves as cofactor. The cofactor is [2Fe-2S] cluster.

It catalyses the reaction (4R,5S)-dethiobiotin + (sulfur carrier)-SH + 2 reduced [2Fe-2S]-[ferredoxin] + 2 S-adenosyl-L-methionine = (sulfur carrier)-H + biotin + 2 5'-deoxyadenosine + 2 L-methionine + 2 oxidized [2Fe-2S]-[ferredoxin]. It functions in the pathway cofactor biosynthesis; biotin biosynthesis; biotin from 7,8-diaminononanoate: step 2/2. Functionally, catalyzes the conversion of dethiobiotin (DTB) to biotin by the insertion of a sulfur atom into dethiobiotin via a radical-based mechanism. In Citrifermentans bemidjiense (strain ATCC BAA-1014 / DSM 16622 / JCM 12645 / Bem) (Geobacter bemidjiensis), this protein is Biotin synthase.